Reading from the N-terminus, the 97-residue chain is Large ribosomal subunit protein eL21 (97 aa).

This sequence belongs to the eukaryotic ribosomal protein eL21 family.

In Methanosarcina mazei (strain ATCC BAA-159 / DSM 3647 / Goe1 / Go1 / JCM 11833 / OCM 88) (Methanosarcina frisia), this protein is Large ribosomal subunit protein eL21.